The primary structure comprises 156 residues: Inorganic triphosphatase (156 aa).

In terms of domain architecture, CYTH spans 2-148 (GKEIEKKFIV…PRYLNSNLVK (147 aa)). Y29 functions as the Proton acceptor in the catalytic mechanism.

As to quaternary structure, homodimer.

It catalyses the reaction triphosphate + H2O = phosphate + diphosphate. The catalysed reaction is ATP + H2O = ADP + phosphate + H(+). Functionally, involved in the hydrolysis of the beta-gamma-phosphoanhydride linkage of triphosphate-containing substrates (inorganic or nucleoside-linked). Catalyzes vigorously the hydrolysis of inorganic triphosphate (PPPi), however it can also catalyze the hydrolysis of ATP to ADP and phosphate. It can use ribonucleotides such as GTP, CTP, or UTP and deoxynucleotides such as dATP, dGTP, dCTP, and dTTP. The protein is Inorganic triphosphatase of Acetivibrio thermocellus (strain ATCC 27405 / DSM 1237 / JCM 9322 / NBRC 103400 / NCIMB 10682 / NRRL B-4536 / VPI 7372) (Clostridium thermocellum).